Reading from the N-terminus, the 136-residue chain is Large ribosomal subunit protein uL16 (136 aa).

Belongs to the universal ribosomal protein uL16 family. Part of the 50S ribosomal subunit.

Binds 23S rRNA and is also seen to make contacts with the A and possibly P site tRNAs. The sequence is that of Large ribosomal subunit protein uL16 from Shewanella sediminis (strain HAW-EB3).